Here is a 180-residue protein sequence, read N- to C-terminus: Translation initiation factor IF-3 (180 aa).

The protein belongs to the IF-3 family. Monomer.

The protein resides in the cytoplasm. IF-3 binds to the 30S ribosomal subunit and shifts the equilibrium between 70S ribosomes and their 50S and 30S subunits in favor of the free subunits, thus enhancing the availability of 30S subunits on which protein synthesis initiation begins. The sequence is that of Translation initiation factor IF-3 from Caldanaerobacter subterraneus subsp. tengcongensis (strain DSM 15242 / JCM 11007 / NBRC 100824 / MB4) (Thermoanaerobacter tengcongensis).